Here is a 312-residue protein sequence, read N- to C-terminus: Malate dehydrogenase (312 aa).

NAD(+) is bound by residues 12-17 (GAGFTG) and aspartate 36. Residues arginine 87 and arginine 93 each coordinate substrate. Residues asparagine 100 and 123–125 (LTN) each bind NAD(+). A substrate-binding site is contributed by asparagine 125. Serine 149 is subject to Phosphoserine. A substrate-binding site is contributed by arginine 156. Histidine 180 functions as the Proton acceptor in the catalytic mechanism.

Belongs to the LDH/MDH superfamily. MDH type 3 family.

It carries out the reaction (S)-malate + NAD(+) = oxaloacetate + NADH + H(+). Catalyzes the reversible oxidation of malate to oxaloacetate. This is Malate dehydrogenase (mdh) from Bacillus subtilis (strain 168).